Reading from the N-terminus, the 505-residue chain is MSEQQAQGAEAAVDLNNELKTRREKLAALREHGVAFPNDFRRDHTSDQLHADFDGKENEELEALNIEVCVAGRMMTRRIMGKASFVTLQDVGGRIQLYVARDDLPEGVYNEQFKKWDLGDILGARGKLFKTKTGELSIHCTELRLLTKALRPLPDKFHGLQDQEARYRQRYLDLIANDESRKTFKVRSQILAGIRQFMVGRGFMEVETPMMQVIPGGASARPFVTHHNALDLDMYLRIAPELYLKRLVVGGFERVFEINRNFRNEGISVRHNPEFTMMELYMAYADYKDLIELTESLFRTLAQDVLGTTQVPYGEETFDFGKPFEKLTMREAIKKYRPETDLADLDDFEKAKGIAQAVGIKVEKSWGLGRVVTEIFEEVAEAHLIQPTFITEYPAEVSPLARRNDENPEITDRFEFFIGGREIGNGFSELNDAEDQAQRFQDQVAAKDAGDDEAMFYDEDYVTALEHGLPPTAGLGIGIDRMVMLFTNSHTIRDVILFPAMRPVK.

Mg(2+)-binding residues include glutamate 415 and glutamate 422.

Belongs to the class-II aminoacyl-tRNA synthetase family. As to quaternary structure, homodimer. The cofactor is Mg(2+).

It is found in the cytoplasm. The enzyme catalyses tRNA(Lys) + L-lysine + ATP = L-lysyl-tRNA(Lys) + AMP + diphosphate. In Cronobacter sakazakii (strain ATCC BAA-894) (Enterobacter sakazakii), this protein is Lysine--tRNA ligase.